We begin with the raw amino-acid sequence, 655 residues long: Chaperone protein dnaK1 (655 aa).

Threonine 197 bears the Phosphothreonine; by autocatalysis mark.

The protein belongs to the heat shock protein 70 family.

Its function is as follows. Acts as a chaperone. The protein is Chaperone protein dnaK1 (dnaK1) of Synechococcus elongatus (strain ATCC 33912 / PCC 7942 / FACHB-805) (Anacystis nidulans R2).